The following is a 399-amino-acid chain: Argininosuccinate synthase (399 aa).

8–16 (AYSGGLDTS) is an ATP binding site. L-citrulline is bound by residues tyrosine 87 and serine 92. Glycine 117 contributes to the ATP binding site. 3 residues coordinate L-aspartate: threonine 119, asparagine 123, and aspartate 124. Residue asparagine 123 participates in L-citrulline binding. The L-citrulline site is built by arginine 127, serine 176, serine 185, glutamate 261, and tyrosine 273.

The protein belongs to the argininosuccinate synthase family. Type 1 subfamily. As to quaternary structure, homotetramer.

Its subcellular location is the cytoplasm. The enzyme catalyses L-citrulline + L-aspartate + ATP = 2-(N(omega)-L-arginino)succinate + AMP + diphosphate + H(+). It functions in the pathway amino-acid biosynthesis; L-arginine biosynthesis; L-arginine from L-ornithine and carbamoyl phosphate: step 2/3. In Clostridioides difficile (strain 630) (Peptoclostridium difficile), this protein is Argininosuccinate synthase.